Here is a 521-residue protein sequence, read N- to C-terminus: Bifunctional purine biosynthesis protein PurH (521 aa).

Positions 1–147 (MAKISRALIS…KNNADVTVLV (147 aa)) constitute an MGS-like domain.

This sequence belongs to the PurH family.

It catalyses the reaction (6R)-10-formyltetrahydrofolate + 5-amino-1-(5-phospho-beta-D-ribosyl)imidazole-4-carboxamide = 5-formamido-1-(5-phospho-D-ribosyl)imidazole-4-carboxamide + (6S)-5,6,7,8-tetrahydrofolate. It carries out the reaction IMP + H2O = 5-formamido-1-(5-phospho-D-ribosyl)imidazole-4-carboxamide. It functions in the pathway purine metabolism; IMP biosynthesis via de novo pathway; 5-formamido-1-(5-phospho-D-ribosyl)imidazole-4-carboxamide from 5-amino-1-(5-phospho-D-ribosyl)imidazole-4-carboxamide (10-formyl THF route): step 1/1. It participates in purine metabolism; IMP biosynthesis via de novo pathway; IMP from 5-formamido-1-(5-phospho-D-ribosyl)imidazole-4-carboxamide: step 1/1. This Geotalea daltonii (strain DSM 22248 / JCM 15807 / FRC-32) (Geobacter daltonii) protein is Bifunctional purine biosynthesis protein PurH.